Reading from the N-terminus, the 413-residue chain is Multidrug resistance protein MdtA (413 aa).

The N-terminal stretch at 1–20 is a signal peptide; that stretch reads MKGSNTFRWAIAIGVVVAAA. 2 disordered regions span residues 31–57 and 391–413; these read SPTAAPGVAAQAPHTASAGRRGMRDGP and EPQTTVADEKSPSRHEGQKGARA. Over residues 397–413 the composition is skewed to basic and acidic residues; sequence ADEKSPSRHEGQKGARA.

This sequence belongs to the membrane fusion protein (MFP) (TC 8.A.1) family. In terms of assembly, part of a tripartite efflux system composed of MdtA, MdtB and MdtC.

It is found in the cell inner membrane. The sequence is that of Multidrug resistance protein MdtA from Salmonella typhimurium (strain LT2 / SGSC1412 / ATCC 700720).